A 356-amino-acid chain; its full sequence is Malate dehydrogenase, glyoxysomal (356 aa).

The N-terminal 36 residues, 1–36, are a transit peptide targeting the glyoxysome; the sequence is MQPIPDVNQRIARISAHLHPPKYQMEESSVLRRANC. Residues 51-57 and Asp77 contribute to the NAD(+) site; that span reads GAAGGIG. Residues Arg124 and Arg130 each coordinate substrate. Residues Asn137 and 160–162 each bind NAD(+); that span reads ISN. Residues Asn162 and Arg196 each coordinate substrate. His220 functions as the Proton acceptor in the catalytic mechanism. Residue Met271 participates in NAD(+) binding.

This sequence belongs to the LDH/MDH superfamily. MDH type 1 family. In terms of assembly, homodimer.

The protein localises to the glyoxysome. It carries out the reaction (S)-malate + NAD(+) = oxaloacetate + NADH + H(+). This Cucumis sativus (Cucumber) protein is Malate dehydrogenase, glyoxysomal (MDHG).